The sequence spans 535 residues: Dual specificity calcium/calmodulin-dependent 3',5'-cyclic nucleotide phosphodiesterase 1A (535 aa).

Calmodulin-binding regions lie at residues 24-44 (TEKMWQRLKGILRCLVKQLER) and 114-137 (EKPKFRSIVHAVQAGIFVERMYRK). Positions 142 to 522 (VGLAYPAAVI…ERWKELAAQE (381 aa)) constitute a PDEase domain. The Proton donor role is filled by H219. H223, H259, D260, and D366 together coordinate Zn(2+). D260 contributes to the Mg(2+) binding site.

The protein belongs to the cyclic nucleotide phosphodiesterase family. PDE1 subfamily. In terms of assembly, homodimer. Interacts with YWHAZ. Zn(2+) serves as cofactor. Requires Mg(2+) as cofactor. In terms of tissue distribution, several tissues, including brain, kidney, testes and heart.

It carries out the reaction a nucleoside 3',5'-cyclic phosphate + H2O = a nucleoside 5'-phosphate + H(+). The enzyme catalyses 3',5'-cyclic GMP + H2O = GMP + H(+). The catalysed reaction is 3',5'-cyclic AMP + H2O = AMP + H(+). With respect to regulation, type I PDE are activated by the binding of calmodulin in the presence of Ca(2+). In terms of biological role, calcium/calmodulin-dependent cyclic nucleotide phosphodiesterase with a dual specificity for the second messengers cGMP and cAMP, which are key regulators of many important physiological processes. Has a higher efficiency with cGMP compared to cAMP. The polypeptide is Dual specificity calcium/calmodulin-dependent 3',5'-cyclic nucleotide phosphodiesterase 1A (Homo sapiens (Human)).